Here is a 536-residue protein sequence, read N- to C-terminus: Lariat debranching enzyme (536 aa).

Cys-8, His-10, Asp-39, and Asn-84 together coordinate a divalent metal cation. Positions 124-154 (SGIFKSHDYRKGHFECPPYNQQTIRSAYHVR) are lariat recognition loop. 3 residues coordinate a divalent metal cation: His-174, His-226, and His-228. Positions 388 to 536 (EEGSVRGEYE…YAAEDEDEAK (149 aa)) are disordered. Over residues 414–426 (EYNTDNSGLSSIN) the composition is skewed to polar residues. Over residues 430–441 (IMLDDEGGDEDL) the composition is skewed to acidic residues. Residues 484 to 504 (ELEKSGVNKQVEEKSLNERPL) show a composition bias toward basic and acidic residues.

The protein belongs to the lariat debranching enzyme family. The cofactor is Fe(2+). It depends on Zn(2+) as a cofactor. Requires Mn(2+) as cofactor.

It localises to the nucleus. Its activity is regulated as follows. Active in presence of diverse metals including Fe(2+), Zn(2+), Mn(2+). Also activated by Ca(2+). Binds two metal cations in two adjacent alpha and beta metal-binding pockets. Functionally, cleaves the 2'-5' phosphodiester linkage at the branch point of excised lariat intron RNA and converts them into linear molecules that can be subsequently degraded, thereby facilitating ribonucleotide turnover. Linked to its role in pre-mRNA processing mechanism, may also participate in retrovirus replication and have an antiviral cell-intrinsic defense function. The polypeptide is Lariat debranching enzyme (DBR1) (Gallus gallus (Chicken)).